The chain runs to 221 residues: High frequency lysogenization protein HflD homolog (221 aa).

Belongs to the HflD family.

The protein resides in the cytoplasm. It is found in the cell inner membrane. The protein is High frequency lysogenization protein HflD homolog of Acidithiobacillus ferrooxidans (strain ATCC 23270 / DSM 14882 / CIP 104768 / NCIMB 8455) (Ferrobacillus ferrooxidans (strain ATCC 23270)).